The following is a 209-amino-acid chain: Ribosomal RNA large subunit methyltransferase E (209 aa).

The S-adenosyl-L-methionine site is built by Gly63, Trp65, Asp83, Asp99, and Asp124. Lys164 functions as the Proton acceptor in the catalytic mechanism.

Belongs to the class I-like SAM-binding methyltransferase superfamily. RNA methyltransferase RlmE family.

Its subcellular location is the cytoplasm. It catalyses the reaction uridine(2552) in 23S rRNA + S-adenosyl-L-methionine = 2'-O-methyluridine(2552) in 23S rRNA + S-adenosyl-L-homocysteine + H(+). Its function is as follows. Specifically methylates the uridine in position 2552 of 23S rRNA at the 2'-O position of the ribose in the fully assembled 50S ribosomal subunit. This Shewanella woodyi (strain ATCC 51908 / MS32) protein is Ribosomal RNA large subunit methyltransferase E.